The chain runs to 193 residues: Ribonuclease HII (193 aa).

The RNase H type-2 domain maps to 15-193; the sequence is YIVAGVDEAG…SYHRRSFKSC (179 aa). 3 residues coordinate a divalent metal cation: Asp21, Glu22, and Asp112.

It belongs to the RNase HII family. Mn(2+) serves as cofactor. The cofactor is Mg(2+).

It is found in the cytoplasm. The catalysed reaction is Endonucleolytic cleavage to 5'-phosphomonoester.. Functionally, endonuclease that specifically degrades the RNA of RNA-DNA hybrids. This is Ribonuclease HII (rnhB) from Rickettsia prowazekii (strain Madrid E).